Consider the following 535-residue polypeptide: MKDYTLSELLNRRLALLGERNNLSLLEQCLHGIERECLRVTATAELAQTPHPQALGAALTNGQVTTDYSESLLEFITPALKNPAETIDSLDKIHRFAYSKLGDELLWSPSMPCPLPDEEHTPIAYYGTSNIGKLKYVYRKGLALRYGKTMQCIAGIHYNFSLPEDAWALLKQTEDFAGDARDYQSHSYIALIRNFRRYSWLLMYLFGASPALDAGFLRGRKHQLEQHFDADTLYLPYATSLRMSDLGYQSDAQADLTPCYNDLVSYTDSLRKAVATPYKPYVDVGTHDQNGEWVQLNTNVLQIENEYYSNIRPKRATYSGERPIQALVARGVQYVEVRCLDINPFLPTGISLEQSRFIDAFVLYCALEESQQLASHECSNASSNFLAVVKEGRRPGLSLQRNNSPVDLKTWATELLEKITPIARLLDQAQGIDEHIKSIAVQQAKIDDASLTPSAQVLASMKAHNEGFTAFSLRQSQAHAEYFRTHPLSAQEQADFEAQAKTSIEEQAELEATEEVVDFDTFVGSYQASILSISN.

The protein belongs to the glutamate--cysteine ligase type 1 family. Type 1 subfamily.

The catalysed reaction is L-cysteine + L-glutamate + ATP = gamma-L-glutamyl-L-cysteine + ADP + phosphate + H(+). It functions in the pathway sulfur metabolism; glutathione biosynthesis; glutathione from L-cysteine and L-glutamate: step 1/2. The chain is Glutamate--cysteine ligase from Pseudomonas savastanoi pv. phaseolicola (strain 1448A / Race 6) (Pseudomonas syringae pv. phaseolicola (strain 1448A / Race 6)).